A 338-amino-acid polypeptide reads, in one-letter code: Dihydroorotate dehydrogenase (quinone) (338 aa).

Residues 68-72 and Thr92 contribute to the FMN site; that span reads AGMDK. A substrate-binding site is contributed by Lys72. Position 117 to 121 (117 to 121) interacts with substrate; sequence NRMGF. FMN contacts are provided by Ser147 and Asn180. Asn180 provides a ligand contact to substrate. Catalysis depends on Ser183, which acts as the Nucleophile. Substrate is bound at residue Asn185. 2 residues coordinate FMN: Lys214 and Thr242. Substrate is bound at residue 243–244; it reads NT. Residues Gly267, Gly296, and 317–318 each bind FMN; that span reads YT.

The protein belongs to the dihydroorotate dehydrogenase family. Type 2 subfamily. Monomer. Requires FMN as cofactor.

It localises to the cell membrane. The catalysed reaction is (S)-dihydroorotate + a quinone = orotate + a quinol. Its pathway is pyrimidine metabolism; UMP biosynthesis via de novo pathway; orotate from (S)-dihydroorotate (quinone route): step 1/1. Its function is as follows. Catalyzes the conversion of dihydroorotate to orotate with quinone as electron acceptor. The chain is Dihydroorotate dehydrogenase (quinone) from Salinispora arenicola (strain CNS-205).